The chain runs to 1166 residues: MGMRFILGRSGTNKSEVILKEIKQKISTNPIGPSIFYIVPDQMTFQQEVALFSDSETNGSIRAQIVSFSRLAWRVLQETGGGTKQFISSVGIQMMLRKIIEEKQGDWNAFQKALKKQGFLGQLETMLTELKRYEITPDDLRMQQSHLTDFVHQSPSEQGLTRKLSDLIYIYETFIYALQGTYVDSEDQLQLLIQQIKQSSILNNADIYIDGFHSFTPQEQSVLTELMKTSNSITVALTLDDPWKEDASELDLFYQPSQTYHVLKQLAWEAGVPVEDPIILDTLEGNFQNRPYFAHMEKYFDSRPAPAYEGEVPIEIFEAVHPRAEVEGIAQQVLELIRDNRYRYRDIALLIRQPEVYHDLIETIFNDYELPVFIDEKRPMLHHPLIELIRSILEVVQGNWRNDAIFRVLKTGLIPSADDEFPLTMDSIDQLENYVIEFGIRSRHQWIGENKWKYQRFRGFDSSAQTDRERELQESMNRYRDQVISAIATVDEQLRAATTVKDLCIAMYQWLEELKIPDQLEVTRKYYDDQGLPEKGREQEQVWDAVIQLFDEMVEIAGEEKMDLSVFQVALDAGIETLQFSHVPPSMDHIIVGTIDRSRMSNIRCAFLLGVNEGIWPMKPTSDGMIDEAERLLLEQNGLKLADTSERQLLDDWFYMYLAFTVAKDRLKISYLLSDEEGKAKMPSQLIHRVEELFPATKNHILLQDPEDESNTRRFVSTELKSRSALTAQLAKFKKGYPIDPIWWEVYQWYVEHHPQGGTTHRVLQGLHYENKPESLQKDTVEQLYPKRIQASVSRLETYYRCSYQHFAKYSLNLEERRTYKLDAPDIGQLFHEALKKITEWIHAEGNDFSALTKSQSSHYANRAVTELSPVLQHQILHSSNRYAYIQKKLEEVIARATFVLGEQARLSHFSPVGLELGFGDGNNQIPSLSMLLENGYELVLRGRIDRVDKAELENNLYLRIIDYKSSSKGLDLTEVYYGIALQMLAYLDVVLTHSEKWLGQQADPAGVLYFHVHNPMISAKGSMTEADIEEELFKQYKMQGLLLSNEEIVKMMDSSLETGSSQIVPAALKKNGGFYSYSKIADQSTFETLQNHIHQLLKSAGIDITNGSVDVNPYQHKQQKACTYCPFHSVCQFDPVLEENNYRKFADIKENDLLQLFEREGENNG.

The UvrD-like helicase ATP-binding domain maps to 1–290 (MGMRFILGRS…DTLEGNFQNR (290 aa)). 8 to 15 (GRSGTNKS) is an ATP binding site. Residues 283-588 (LEGNFQNRPY…QFSHVPPSMD (306 aa)) form the UvrD-like helicase C-terminal domain. [4Fe-4S] cluster-binding residues include cysteine 802, cysteine 1123, cysteine 1126, and cysteine 1132.

Belongs to the helicase family. AddB/RexB type 1 subfamily. As to quaternary structure, heterodimer of AddA and AddB. The cofactor is Mg(2+). [4Fe-4S] cluster serves as cofactor.

In terms of biological role, the heterodimer acts as both an ATP-dependent DNA helicase and an ATP-dependent, dual-direction single-stranded exonuclease. Recognizes the chi site generating a DNA molecule suitable for the initiation of homologous recombination. The AddB subunit has 5' -&gt; 3' nuclease activity but not helicase activity. In Oceanobacillus iheyensis (strain DSM 14371 / CIP 107618 / JCM 11309 / KCTC 3954 / HTE831), this protein is ATP-dependent helicase/deoxyribonuclease subunit B.